The primary structure comprises 319 residues: tRNA-modifying protein YgfZ (319 aa).

Tryptophan 27 and tryptophan 189 together coordinate folate.

This sequence belongs to the tRNA-modifying YgfZ family.

The protein localises to the cytoplasm. In terms of biological role, folate-binding protein involved in regulating the level of ATP-DnaA and in the modification of some tRNAs. It is probably a key factor in regulatory networks that act via tRNA modification, such as initiation of chromosomal replication. The polypeptide is tRNA-modifying protein YgfZ (Buchnera aphidicola subsp. Schizaphis graminum (strain Sg)).